The chain runs to 331 residues: Gem-associated protein 2 (331 aa).

Disordered stretches follow at residues 1 to 23, 101 to 130, and 151 to 222; these read MDEFQSKAFEVGEEIEPDDNEPL, SNRPSNNNNNNNNNNNNNNNNNNNNNLIPQ, and NNNN…TKKP. Residues 11–21 show a composition bias toward acidic residues; sequence VGEEIEPDDNE. Low complexity predominate over residues 106 to 126; it reads NNNNNNNNNNNNNNNNNNNNN. Positions 165 to 215 are enriched in acidic residues; that stretch reads DNQEDDDDDENNEDYEYNENKEEEEEEEEEEEEEEEVEEEEEEEEEEEEVV. Residues 173–224 adopt a coiled-coil conformation; that stretch reads DENNEDYEYNENKEEEEEEEEEEEEEEEVEEEEEEEEEEEEVVDYSTKKPTL.

Belongs to the gemin-2 family.

The protein localises to the nucleus. The protein resides in the gem. Its subcellular location is the cytoplasm. In terms of biological role, the SMN complex catalyzes the assembly of small nuclear ribonucleoproteins (snRNPs), the building blocks of the spliceosome, and thereby plays an important role in the splicing of cellular pre-mRNAs. Most spliceosomal snRNPs contain a common set of Sm proteins SNRPB, SNRPD1, SNRPD2, SNRPD3, SNRPE, SNRPF and SNRPG that assemble in a heptameric protein ring on the Sm site of the small nuclear RNA to form the core snRNP (Sm core). In the cytosol, the Sm proteins SNRPD1, SNRPD2, SNRPE, SNRPF and SNRPG (5Sm) are trapped in an inactive 6S pICln-Sm complex by the chaperone CLNS1A that controls the assembly of the core snRNP. To assemble core snRNPs, the SMN complex accepts the trapped 5Sm proteins from CLNS1A. Binding of snRNA inside 5Sm ultimately triggers eviction of the SMN complex, thereby allowing binding of SNRPD3 and SNRPB to complete assembly of the core snRNP. Within the SMN complex, GEMIN2 constrains the conformation of 5Sm, thereby promoting 5Sm binding to snRNA containing the snRNP code (a nonameric Sm site and a 3'-adjacent stem-loop), thus preventing progression of assembly until a cognate substrate is bound. May play an essential role in spliceosomal snRNP assembly in the cytoplasm and may be required for pre-mRNA splicing in the nucleus. This Dictyostelium discoideum (Social amoeba) protein is Gem-associated protein 2 (gemin2).